The chain runs to 371 residues: Cytochrome b (371 aa).

4 helical membrane-spanning segments follow: residues 25–45 (FGSMLLTCLALQVLTGFFLAV), 69–90 (WMMQNLHAIGASMFFICIYIHI), 105–125 (WMSGITLLITLMATAFFGYVL), and 170–190 (FFALHFILPFAIISLSSLHII). Positions 75 and 89 each coordinate heme b. Positions 174 and 188 each coordinate heme b. H193 is a binding site for a ubiquinone. Transmembrane regions (helical) follow at residues 218–238 (HKDLLLLTLMILLLLIIVSFS), 280–300 (LGGALALVMSIMILFTIPFTH), 312–332 (LSQLMFWALISTFVTITWAAT), and 339–358 (FIIISQVTSTLYFTFFLSIP).

Belongs to the cytochrome b family. The cytochrome bc1 complex contains 3 respiratory subunits (MT-CYB, CYC1 and UQCRFS1), 2 core proteins (UQCRC1 and UQCRC2) and probably 6 low-molecular weight proteins. It depends on heme b as a cofactor.

It is found in the mitochondrion inner membrane. Component of the ubiquinol-cytochrome c reductase complex (complex III or cytochrome b-c1 complex) that is part of the mitochondrial respiratory chain. The b-c1 complex mediates electron transfer from ubiquinol to cytochrome c. Contributes to the generation of a proton gradient across the mitochondrial membrane that is then used for ATP synthesis. The polypeptide is Cytochrome b (MT-CYB) (Antaresia childreni (Children's python)).